We begin with the raw amino-acid sequence, 325 residues long: Elongation factor P--(R)-beta-lysine ligase (325 aa).

Substrate is bound at residue 76-78; it reads SPE. Residues 100 to 102 and Asn-109 contribute to the ATP site; that span reads RNE. A substrate-binding site is contributed by Tyr-118. 244–245 provides a ligand contact to ATP; the sequence is EL. Substrate is bound at residue Glu-251. Residue Gly-300 coordinates ATP.

This sequence belongs to the class-II aminoacyl-tRNA synthetase family. EpmA subfamily. Homodimer.

The catalysed reaction is D-beta-lysine + L-lysyl-[protein] + ATP = N(6)-((3R)-3,6-diaminohexanoyl)-L-lysyl-[protein] + AMP + diphosphate + H(+). Functionally, with EpmB is involved in the beta-lysylation step of the post-translational modification of translation elongation factor P (EF-P) on 'Lys-34'. Catalyzes the ATP-dependent activation of (R)-beta-lysine produced by EpmB, forming a lysyl-adenylate, from which the beta-lysyl moiety is then transferred to the epsilon-amino group of EF-P 'Lys-34'. In Escherichia fergusonii (strain ATCC 35469 / DSM 13698 / CCUG 18766 / IAM 14443 / JCM 21226 / LMG 7866 / NBRC 102419 / NCTC 12128 / CDC 0568-73), this protein is Elongation factor P--(R)-beta-lysine ligase.